The sequence spans 456 residues: Potassium voltage-gated channel subfamily A member 7 (456 aa).

The helical transmembrane segment at V144–T164 threads the bilayer. N-linked (GlcNAc...) asparagine glycosylation occurs at N191. Residues F209 to L229 form a helical membrane-spanning segment. C231 carries S-palmitoyl cysteine lipidation. Residues V241–L261 traverse the membrane as a helical segment. Residues I276 to S295 traverse the membrane as a helical; Voltage-sensor segment. Residues L312–F332 form a helical membrane-spanning segment. Residues T358–D363 carry the Selectivity filter motif. The helical transmembrane segment at I373–I393 threads the bilayer.

The protein belongs to the potassium channel family. A (Shaker) (TC 1.A.1.2) subfamily. Kv1.7/KCNA7 sub-subfamily. Heterotetramer of potassium channel proteins. Highly expressed in skeletal muscle, heart and kidney.

Its subcellular location is the membrane. The enzyme catalyses K(+)(in) = K(+)(out). Functionally, mediates the voltage-dependent potassium ion permeability of excitable membranes. Assuming opened or closed conformations in response to the voltage difference across the membrane, the protein forms a potassium-selective channel through which potassium ions may pass in accordance with their electrochemical gradient. The chain is Potassium voltage-gated channel subfamily A member 7 (KCNA7) from Homo sapiens (Human).